The chain runs to 242 residues: Carboxy-S-adenosyl-L-methionine synthase (242 aa).

S-adenosyl-L-methionine-binding positions include Tyr39, 64-66 (GCS), 89-90 (DN), 117-118 (DI), Asn132, and Arg199.

Belongs to the class I-like SAM-binding methyltransferase superfamily. Cx-SAM synthase family. As to quaternary structure, homodimer.

The enzyme catalyses prephenate + S-adenosyl-L-methionine = carboxy-S-adenosyl-L-methionine + 3-phenylpyruvate + H2O. Functionally, catalyzes the conversion of S-adenosyl-L-methionine (SAM) to carboxy-S-adenosyl-L-methionine (Cx-SAM). This Vibrio atlanticus (strain LGP32) (Vibrio splendidus (strain Mel32)) protein is Carboxy-S-adenosyl-L-methionine synthase.